Here is a 182-residue protein sequence, read N- to C-terminus: Protein Syd (182 aa).

The protein belongs to the Syd family.

The protein resides in the cell inner membrane. Interacts with the SecY protein in vivo. May bind preferentially to an uncomplexed state of SecY, thus functioning either as a chelating agent for excess SecY in the cell or as a regulatory factor that negatively controls the translocase function. This is Protein Syd from Aeromonas salmonicida (strain A449).